Consider the following 502-residue polypeptide: Lysine--tRNA ligase (502 aa).

Residues E398 and E405 each contribute to the Mg(2+) site.

Belongs to the class-II aminoacyl-tRNA synthetase family. Homodimer. Mg(2+) serves as cofactor.

It is found in the cytoplasm. It carries out the reaction tRNA(Lys) + L-lysine + ATP = L-lysyl-tRNA(Lys) + AMP + diphosphate. In Thermosipho melanesiensis (strain DSM 12029 / CIP 104789 / BI429), this protein is Lysine--tRNA ligase.